The chain runs to 173 residues: NADH-quinone oxidoreductase subunit B 1 (173 aa).

Residues cysteine 42, cysteine 43, cysteine 107, and cysteine 137 each coordinate [4Fe-4S] cluster.

The protein belongs to the complex I 20 kDa subunit family. As to quaternary structure, NDH-1 is composed of 14 different subunits. Subunits NuoB, C, D, E, F, and G constitute the peripheral sector of the complex. The cofactor is [4Fe-4S] cluster.

It is found in the cell inner membrane. It catalyses the reaction a quinone + NADH + 5 H(+)(in) = a quinol + NAD(+) + 4 H(+)(out). Functionally, NDH-1 shuttles electrons from NADH, via FMN and iron-sulfur (Fe-S) centers, to quinones in the respiratory chain. The immediate electron acceptor for the enzyme in this species is believed to be ubiquinone. Couples the redox reaction to proton translocation (for every two electrons transferred, four hydrogen ions are translocated across the cytoplasmic membrane), and thus conserves the redox energy in a proton gradient. The polypeptide is NADH-quinone oxidoreductase subunit B 1 (Anaeromyxobacter sp. (strain K)).